Here is a 214-residue protein sequence, read N- to C-terminus: Riboflavin kinase (214 aa).

Positions 1–91 (MRSIMEVETL…YCSIFEDGGA (91 aa)) are H-T-H motif-like. The interval 92–214 (PVMRGKVVTG…DGDEVEVTLE (123 aa)) is riboflavin kinase. Residue 101–106 (GLGEGQ) participates in CDP binding. Mg(2+) is bound by residues Thr-130 and Asn-132. FMN contacts are provided by Thr-182 and Glu-190. 195–198 (IKLR) lines the CDP pocket.

It belongs to the archaeal riboflavin kinase family. The cofactor is Mg(2+).

The enzyme catalyses riboflavin + CTP = CDP + FMN + H(+). It participates in cofactor biosynthesis; FMN biosynthesis; FMN from riboflavin (CTP route): step 1/1. Catalyzes the CTP-dependent phosphorylation of riboflavin (vitamin B2) to form flavin mononucleotide (FMN). The chain is Riboflavin kinase (ribK) from Methanocella arvoryzae (strain DSM 22066 / NBRC 105507 / MRE50).